We begin with the raw amino-acid sequence, 393 residues long: Iripin-3 (393 aa).

The signal sequence occupies residues 1–16 (MKVITAFLSVFVLCSA). Residues N104 and N265 are each glycosylated (N-linked (GlcNAc...) asparagine).

This sequence belongs to the serpin family. As to quaternary structure, interacts with human KLKB1. Interacts with human ST14. Interacts with human F2 (thrombin). In terms of tissue distribution, saliva (at protein level). Expressed in salivary gland. Expressed in ovary during blood feeding.

Its subcellular location is the secreted. Its function is as follows. Serine protease inhibitor that modulates blood feeding of ticks on vertebrate species. Moderately inhibits host plasma kallikrein (KLKB1), matriptase (ST14), trypsin, plasmin (PLG), thrombin (F2) and coagulation factor VIIa (F7). Slightly inhibits host alpha-chymotrypsin, tPA/tissue-type plasminogen activator (PLAT), uPA/urokinase-type plasminogen activator (PLAU) and coagulation factor XIIa (F12). Slightly inhibits the extrinsic pathway while not affecting the intrinsic and common pathways of host blood coagulation. Decreases synthesis and secretion of IL6 by mouse bone marrow-derived macrophages. Decreases viability of mouse B- and T-cells. Decreases proliferation of mouse CD4+ T-cells in response to stimulation. Inhibits Th1 immune responses in mouse cells. Promotes differentiation of mouse regulatory T-cells. The polypeptide is Iripin-3 (Ixodes ricinus (Common tick)).